Reading from the N-terminus, the 253-residue chain is ATP synthase subunit b 1 (253 aa).

A helical membrane pass occupies residues 2 to 22 (LIDWFTVIAELVNFLILVWLL).

It belongs to the ATPase B chain family. In terms of assembly, F-type ATPases have 2 components, F(1) - the catalytic core - and F(0) - the membrane proton channel. F(1) has five subunits: alpha(3), beta(3), gamma(1), delta(1), epsilon(1). F(0) has four main subunits: a(1), b(2) and c(10-14). The alpha and beta chains form an alternating ring which encloses part of the gamma chain. F(1) is attached to F(0) by a central stalk formed by the gamma and epsilon chains, while a peripheral stalk is formed by the delta and b chains.

It localises to the cell inner membrane. Its function is as follows. F(1)F(0) ATP synthase produces ATP from ADP in the presence of a proton or sodium gradient. F-type ATPases consist of two structural domains, F(1) containing the extramembraneous catalytic core and F(0) containing the membrane proton channel, linked together by a central stalk and a peripheral stalk. During catalysis, ATP synthesis in the catalytic domain of F(1) is coupled via a rotary mechanism of the central stalk subunits to proton translocation. In terms of biological role, component of the F(0) channel, it forms part of the peripheral stalk, linking F(1) to F(0). This chain is ATP synthase subunit b 1, found in Prosthecochloris aestuarii (strain DSM 271 / SK 413).